The sequence spans 456 residues: MEMEEVIAEVLQKIVPTEEERAFVKELIGELEGIAREKAQELGLEVKPYFVGSLAKDTYLAGDHDVDLFLAFPLDTPLEEVRERGLELGKEIGKTLGEYEIAYAEHPYVRAKYRDVKVDLVPCYDVRDWKDVRTAVDRSILHTKWVNENLNGKNNEVRLLKRFLKGIKAYGSEIYVRGFSGYLSEILVIKYGSFVEVLEKADFILRQKVVDPAGWLKREPEIAMKTVRREVEEDKPLVVIDPVDPRRNVAANLSWEKYGRFYFKADEFLQRPSLEFFFPTGKTGGDYLAELRRKGTHLITLLFDVPEMVDDLLFPQLERSARGFEKALSREGFEVLGWNTGRYGAEKAFVMLELDRVERPRVKIHPGPEFFTERGRDFYRKNERVWLVGKRLYAEKRVKENIIDVVRELLEKNQVALGKNLRETVKGAEILVDYVPRPLENEAYLFLSREKEGLKH.

ATP-binding residues include Ser-53 and Lys-56. Residues Ser-53 and Lys-56 each coordinate CTP. Mg(2+) contacts are provided by Asp-65, Asp-67, and Asp-119. ATP-binding residues include His-142, Lys-161, and Tyr-170. Residues His-142, Lys-161, and Tyr-170 each contribute to the CTP site.

It belongs to the tRNA nucleotidyltransferase/poly(A) polymerase family. Archaeal CCA-adding enzyme subfamily. As to quaternary structure, homodimer. It depends on Mg(2+) as a cofactor.

The enzyme catalyses a tRNA precursor + 2 CTP + ATP = a tRNA with a 3' CCA end + 3 diphosphate. The catalysed reaction is a tRNA with a 3' CCA end + 2 CTP + ATP = a tRNA with a 3' CCACCA end + 3 diphosphate. In terms of biological role, catalyzes the addition and repair of the essential 3'-terminal CCA sequence in tRNAs without using a nucleic acid template. Adds these three nucleotides in the order of C, C, and A to the tRNA nucleotide-73, using CTP and ATP as substrates and producing inorganic pyrophosphate. tRNA 3'-terminal CCA addition is required both for tRNA processing and repair. Also involved in tRNA surveillance by mediating tandem CCA addition to generate a CCACCA at the 3' terminus of unstable tRNAs. While stable tRNAs receive only 3'-terminal CCA, unstable tRNAs are marked with CCACCA and rapidly degraded. In Thermococcus kodakarensis (strain ATCC BAA-918 / JCM 12380 / KOD1) (Pyrococcus kodakaraensis (strain KOD1)), this protein is CCA-adding enzyme.